A 196-amino-acid polypeptide reads, in one-letter code: Putative 3-methyladenine DNA glycosylase (196 aa).

Belongs to the DNA glycosylase MPG family.

The sequence is that of Putative 3-methyladenine DNA glycosylase from Chlorobium luteolum (strain DSM 273 / BCRC 81028 / 2530) (Pelodictyon luteolum).